Reading from the N-terminus, the 217-residue chain is UPF0502 protein ASA_1460 (217 aa).

Belongs to the UPF0502 family.

The protein is UPF0502 protein ASA_1460 of Aeromonas salmonicida (strain A449).